We begin with the raw amino-acid sequence, 239 residues long: Purine nucleoside phosphorylase DeoD-type (239 aa).

Residue H5 coordinates a purine D-ribonucleoside. Phosphate contacts are provided by residues G21, R25, R44, and 88 to 91 (RVGS). Residues 180-182 (EME) and 204-205 (SD) contribute to the a purine D-ribonucleoside site. D205 functions as the Proton donor in the catalytic mechanism.

Belongs to the PNP/UDP phosphorylase family. As to quaternary structure, homohexamer; trimer of homodimers.

It catalyses the reaction a purine D-ribonucleoside + phosphate = a purine nucleobase + alpha-D-ribose 1-phosphate. The enzyme catalyses a purine 2'-deoxy-D-ribonucleoside + phosphate = a purine nucleobase + 2-deoxy-alpha-D-ribose 1-phosphate. Its function is as follows. Catalyzes the reversible phosphorolytic breakdown of the N-glycosidic bond in the beta-(deoxy)ribonucleoside molecules, with the formation of the corresponding free purine bases and pentose-1-phosphate. The polypeptide is Purine nucleoside phosphorylase DeoD-type (Myxococcus xanthus (strain DK1622)).